We begin with the raw amino-acid sequence, 282 residues long: tRNA pseudouridine synthase B (282 aa).

D39 serves as the catalytic Nucleophile.

Belongs to the pseudouridine synthase TruB family. Type 1 subfamily.

The enzyme catalyses uridine(55) in tRNA = pseudouridine(55) in tRNA. Functionally, responsible for synthesis of pseudouridine from uracil-55 in the psi GC loop of transfer RNAs. This Borrelia garinii subsp. bavariensis (strain ATCC BAA-2496 / DSM 23469 / PBi) (Borreliella bavariensis) protein is tRNA pseudouridine synthase B.